A 633-amino-acid chain; its full sequence is GRAM domain-containing protein 4 (633 aa).

Disordered stretches follow at residues 1–46, 72–109, and 182–216; these read MGIA…VRPR, LAES…AGPG, and VLKA…RSQG. The segment covering 27-39 has biased composition (basic and acidic residues); the sequence is PWDKGLSGREPPR. S75 and S79 each carry phosphoserine. A compositionally biased stretch (basic and acidic residues) spans 95 to 104; sequence SPRDSEELRD. Positions 134-190 form a coiled coil; sequence HLEIALLEKHFLQEELRKLREETNSEMLRQELDRERQRRIELEQKMQEVLKARSEEQ. A compositionally biased stretch (low complexity) spans 190-205; that stretch reads QPAQPQQPPKGQSQAS. The next 3 membrane-spanning stretches (helical) occupy residues 295–315, 389–409, and 411–431; these read VYMN…LAIL, TTQK…FFPY, and LVGL…DFIF. The GRAM domain maps to 500 to 578; sequence GNFHEIFNLT…MDITDIQKYK (79 aa).

In terms of assembly, interacts with RTN4 (isoform B).

It localises to the mitochondrion membrane. The protein resides in the endoplasmic reticulum membrane. Plays a role as a mediator of E2F1-induced apoptosis in the absence of p53/TP53. Inhibits TLR9 response to nucelic acids and regulates TLR9-mediated innate immune response. The polypeptide is GRAM domain-containing protein 4 (Mus musculus (Mouse)).